A 245-amino-acid polypeptide reads, in one-letter code: 1-(5-phosphoribosyl)-5-[(5-phosphoribosylamino)methylideneamino] imidazole-4-carboxamide isomerase (245 aa).

Catalysis depends on Asp-8, which acts as the Proton acceptor. Asp-130 functions as the Proton donor in the catalytic mechanism.

This sequence belongs to the HisA/HisF family.

It is found in the cytoplasm. It catalyses the reaction 1-(5-phospho-beta-D-ribosyl)-5-[(5-phospho-beta-D-ribosylamino)methylideneamino]imidazole-4-carboxamide = 5-[(5-phospho-1-deoxy-D-ribulos-1-ylimino)methylamino]-1-(5-phospho-beta-D-ribosyl)imidazole-4-carboxamide. It functions in the pathway amino-acid biosynthesis; L-histidine biosynthesis; L-histidine from 5-phospho-alpha-D-ribose 1-diphosphate: step 4/9. The sequence is that of 1-(5-phosphoribosyl)-5-[(5-phosphoribosylamino)methylideneamino] imidazole-4-carboxamide isomerase from Pseudomonas savastanoi pv. phaseolicola (strain 1448A / Race 6) (Pseudomonas syringae pv. phaseolicola (strain 1448A / Race 6)).